The following is a 374-amino-acid chain: UDP-N-acetylglucosamine--N-acetylmuramyl-(pentapeptide) pyrophosphoryl-undecaprenol N-acetylglucosamine transferase (374 aa).

UDP-N-acetyl-alpha-D-glucosamine contacts are provided by residues 10 to 12 (TGG), asparagine 124, arginine 166, serine 196, and glutamine 294.

This sequence belongs to the glycosyltransferase 28 family. MurG subfamily.

The protein localises to the cell membrane. The enzyme catalyses di-trans,octa-cis-undecaprenyl diphospho-N-acetyl-alpha-D-muramoyl-L-alanyl-D-glutamyl-meso-2,6-diaminopimeloyl-D-alanyl-D-alanine + UDP-N-acetyl-alpha-D-glucosamine = di-trans,octa-cis-undecaprenyl diphospho-[N-acetyl-alpha-D-glucosaminyl-(1-&gt;4)]-N-acetyl-alpha-D-muramoyl-L-alanyl-D-glutamyl-meso-2,6-diaminopimeloyl-D-alanyl-D-alanine + UDP + H(+). Its pathway is cell wall biogenesis; peptidoglycan biosynthesis. Cell wall formation. Catalyzes the transfer of a GlcNAc subunit on undecaprenyl-pyrophosphoryl-MurNAc-pentapeptide (lipid intermediate I) to form undecaprenyl-pyrophosphoryl-MurNAc-(pentapeptide)GlcNAc (lipid intermediate II). This Symbiobacterium thermophilum (strain DSM 24528 / JCM 14929 / IAM 14863 / T) protein is UDP-N-acetylglucosamine--N-acetylmuramyl-(pentapeptide) pyrophosphoryl-undecaprenol N-acetylglucosamine transferase.